The sequence spans 310 residues: Porphobilinogen deaminase (310 aa).

Cys242 carries the post-translational modification S-(dipyrrolylmethanemethyl)cysteine.

Belongs to the HMBS family. As to quaternary structure, monomer. Dipyrromethane serves as cofactor.

It catalyses the reaction 4 porphobilinogen + H2O = hydroxymethylbilane + 4 NH4(+). It functions in the pathway porphyrin-containing compound metabolism; protoporphyrin-IX biosynthesis; coproporphyrinogen-III from 5-aminolevulinate: step 2/4. In terms of biological role, tetrapolymerization of the monopyrrole PBG into the hydroxymethylbilane pre-uroporphyrinogen in several discrete steps. The sequence is that of Porphobilinogen deaminase from Shewanella baltica (strain OS155 / ATCC BAA-1091).